An 833-amino-acid polypeptide reads, in one-letter code: Phenylalanine--tRNA ligase beta subunit (833 aa).

The 116-residue stretch at 42-157 (ADLKGPLAVG…PEYEVGTDAI (116 aa)) folds into the tRNA-binding domain. In terms of domain architecture, B5 spans 411-485 (SAPHTITIPA…RLEGYENLPS (75 aa)). Asp-463, Asp-469, Glu-472, and Glu-473 together coordinate Mg(2+). In terms of domain architecture, FDX-ACB spans 739-832 (STFPVATQDV…AAERTGAALR (94 aa)).

The protein belongs to the phenylalanyl-tRNA synthetase beta subunit family. Type 1 subfamily. In terms of assembly, tetramer of two alpha and two beta subunits. Mg(2+) serves as cofactor.

The protein resides in the cytoplasm. It carries out the reaction tRNA(Phe) + L-phenylalanine + ATP = L-phenylalanyl-tRNA(Phe) + AMP + diphosphate + H(+). This Streptomyces avermitilis (strain ATCC 31267 / DSM 46492 / JCM 5070 / NBRC 14893 / NCIMB 12804 / NRRL 8165 / MA-4680) protein is Phenylalanine--tRNA ligase beta subunit.